A 1045-amino-acid polypeptide reads, in one-letter code: Elongation factor 3 (1045 aa).

7 HEAT repeats span residues 5–42, 43–85, 86–123, 125–162, 166–203, 205–241, and 242–279; these read DQSL…GNII, EHDI…PSVE, PFVI…AINP, AIKA…AAKE, LRMP…TVDN, DIER…EVTP, and ATLS…LVED. Isoleucine 42, histidine 44, and serine 83 together coordinate ADP. Threonine 392, histidine 396, and glutamate 397 together coordinate ADP. 2 consecutive ABC transporter domains span residues 426–641 and 667–993; these read DEGE…YYEL and VKVS…KKED. Positions 703, 922, 925, and 951 each coordinate ADP. Residues 974 to 1045 are disordered; it reads SGHNWVSGQG…AYVSSDDEDF (72 aa). The segment covering 1007-1031 has biased composition (basic residues); it reads GGKKKKKLSSAELRKKKKERMKKKK.

It belongs to the ABC transporter superfamily. ABCF family. EF3 subfamily. As to quaternary structure, monomer.

The protein localises to the cytoplasm. It is found in the cytosol. It carries out the reaction ATP + H2O = ADP + phosphate + H(+). It participates in protein biosynthesis; polypeptide chain elongation. In terms of biological role, ribosome-dependent ATPase that functions in cytoplasmic translation elongation. Required for the ATP-dependent release of deacylated tRNA from the ribosomal E-site during protein biosynthesis. Stimulates the eEF1A-dependent binding of aminoacyl-tRNA to the ribosomal A-site, which has reduced affinity for tRNA as long as the E-site is occupied. Assists translation termination by stimulating the release of nascent protein from the ribosome by release factors. This chain is Elongation factor 3 (TEF3), found in Candida glabrata (strain ATCC 2001 / BCRC 20586 / JCM 3761 / NBRC 0622 / NRRL Y-65 / CBS 138) (Yeast).